The sequence spans 83 residues: METILGMTAIAVALLIGMGALGTAIGFGLLGGKFLEGAARQPEMAPMLQVKMFIVAGLLDAVTMIGVGIALYMLFTNPLGAML.

Transmembrane regions (helical) follow at residues 10-30 (IAVALLIGMGALGTAIGFGLL) and 52-72 (MFIVAGLLDAVTMIGVGIALY).

It belongs to the ATPase C chain family. F-type ATPases have 2 components, F(1) - the catalytic core - and F(0) - the membrane proton channel. F(1) has five subunits: alpha(3), beta(3), gamma(1), delta(1), epsilon(1). F(0) has three main subunits: a(1), b(2) and c(10-14). The alpha and beta chains form an alternating ring which encloses part of the gamma chain. F(1) is attached to F(0) by a central stalk formed by the gamma and epsilon chains, while a peripheral stalk is formed by the delta and b chains.

Its subcellular location is the cell inner membrane. Functionally, f(1)F(0) ATP synthase produces ATP from ADP in the presence of a proton or sodium gradient. F-type ATPases consist of two structural domains, F(1) containing the extramembraneous catalytic core and F(0) containing the membrane proton channel, linked together by a central stalk and a peripheral stalk. During catalysis, ATP synthesis in the catalytic domain of F(1) is coupled via a rotary mechanism of the central stalk subunits to proton translocation. In terms of biological role, key component of the F(0) channel; it plays a direct role in translocation across the membrane. A homomeric c-ring of between 10-14 subunits forms the central stalk rotor element with the F(1) delta and epsilon subunits. The chain is ATP synthase subunit c from Shewanella denitrificans (strain OS217 / ATCC BAA-1090 / DSM 15013).